Reading from the N-terminus, the 73-residue chain is Large ribosomal subunit protein bL31 (73 aa).

It belongs to the bacterial ribosomal protein bL31 family. Type A subfamily. In terms of assembly, part of the 50S ribosomal subunit.

Its function is as follows. Binds the 23S rRNA. This chain is Large ribosomal subunit protein bL31, found in Rhizobium rhizogenes (strain K84 / ATCC BAA-868) (Agrobacterium radiobacter).